Reading from the N-terminus, the 181-residue chain is uncharacterized protein (181 aa).

Gly residues-rich tracts occupy residues 143 to 156 and 170 to 181; these read RRGG…GPRG and GPFGPGYRGPRF. Residues 143–181 form a disordered region; it reads RRGGRYGDFGGPRGPRGPRNDGPFGPFGPFGPGYRGPRF.

In terms of assembly, has been detected in a cytochrome bc1-aa3 supercomplex; its deletion however leaves complex activity unaffected.

This is an uncharacterized protein from Corynebacterium glutamicum (strain ATCC 13032 / DSM 20300 / JCM 1318 / BCRC 11384 / CCUG 27702 / LMG 3730 / NBRC 12168 / NCIMB 10025 / NRRL B-2784 / 534).